Here is a 417-residue protein sequence, read N- to C-terminus: Calreticulin (417 aa).

A signal peptide spans 1 to 17 (MLLSVPLLLGLLGLAAA). Positions 18-197 (EPAVYFKEQF…NSQVESGSLE (180 aa)) are N-domain. Gln26 is a Ca(2+) binding site. The residue at position 48 (Lys48) is an N6-acetyllysine. Residues Lys62 and Lys64 each contribute to the Ca(2+) site. Lys64 carries the post-translational modification N6-(2-hydroxyisobutyryl)lysine. An intrachain disulfide couples Cys105 to Cys137. Residues Tyr109, Lys111, Tyr128, and Asp135 each coordinate an alpha-D-glucoside. An N6-acetyllysine modification is found at Lys159. The 1-1 repeat unit spans residues 191–202 (VESGSLEDDWDF). The 4 X approximate repeats stretch occupies residues 191 to 255 (VESGSLEDDW…DAKKPEDWDE (65 aa)). The disordered stretch occupies residues 193–277 (SGSLEDDWDF…NPEYKGEWKP (85 aa)). Positions 198–308 (DDWDFLPPKK…YSPDANIYAY (111 aa)) are P-domain. The span at 207–251 (KIKDPDAAKPEDWDERAKIDDPTDSKPEDWDKPEHIPDPDAKKPE) shows a compositional bias: basic and acidic residues. N6-acetyllysine is present on Lys209. A run of 6 repeats spans residues 210 to 221 (DPDAAKPEDWDE), 227 to 238 (DPTDSKPEDWDK), 244 to 255 (DPDAKKPEDWDE), 259 to 269 (GEWEPPVIQNP), 273 to 283 (GEWKPRQIDNP), and 287 to 297 (GTWIHPEIDNP). The interaction with PPIB stretch occupies residues 237–270 (DKPEHIPDPDAKKPEDWDEEMDGEWEPPVIQNPE). A compositionally biased stretch (acidic residues) spans 252 to 261 (DWDEEMDGEW). The interval 259–297 (GEWEPPVIQNPEYKGEWKPRQIDNPDYKGTWIHPEIDNP) is 3 X approximate repeats. Positions 309–417 (DSFAVLGLDL…TTPGQTKDEL (109 aa)) are C-domain. Asp317 is an an alpha-D-glucoside binding site. A Ca(2+)-binding site is contributed by Asp328. The disordered stretch occupies residues 350–417 (TKASEKQMKD…TTPGQTKDEL (68 aa)). Basic and acidic residues predominate over residues 352–379 (ASEKQMKDKQDEEQRLKEEEEDKKRKEE). A compositionally biased stretch (acidic residues) spans 380-408 (EEAEDKEDEDDRDEDEEDEDEKEEDEEDT). The Prevents secretion from ER motif lies at 414–417 (KDEL).

Belongs to the calreticulin family. Monomer. Component of an EIF2 complex at least composed of CELF1/CUGBP1, CALR, CALR3, EIF2S1, EIF2S2, HSP90B1 and HSPA5. Interacts with PDIA3/ERp57 and SPACA9. Interacts with TRIM21. Interacts with NR3C1. Interacts with PPIB. Interacts (via P-domain) with PDIA5. Interacts with GABARAP. Interacts with CLCC1.

Its subcellular location is the endoplasmic reticulum lumen. It is found in the cytoplasm. It localises to the cytosol. The protein resides in the cytolytic granule. The protein localises to the secreted. Its subcellular location is the extracellular space. It is found in the extracellular matrix. It localises to the cell surface. The protein resides in the sarcoplasmic reticulum lumen. The protein localises to the cytoplasmic vesicle. Its subcellular location is the secretory vesicle. It is found in the cortical granule. Its function is as follows. Calcium-binding chaperone that promotes folding, oligomeric assembly and quality control in the endoplasmic reticulum (ER) via the calreticulin/calnexin cycle. This lectin interacts transiently with almost all of the monoglucosylated glycoproteins that are synthesized in the ER. Interacts with the DNA-binding domain of NR3C1 and mediates its nuclear export. Involved in maternal gene expression regulation. May participate in oocyte maturation via the regulation of calcium homeostasis. Present in the cortical granules of non-activated oocytes, is exocytosed during the cortical reaction in response to oocyte activation and might participate in the block to polyspermy. The polypeptide is Calreticulin (CALR) (Cricetulus griseus (Chinese hamster)).